The following is a 185-amino-acid chain: Ethylene-responsive transcription factor ERF017 (185 aa).

Residues 11–68 constitute a DNA-binding region (AP2/ERF); that stretch reads KYKGVRKRKWGKWVSEIRLPNSRERIWLGSYDTPEKAARAFDAALYCLRGNNAKFNFP.

It belongs to the AP2/ERF transcription factor family. ERF subfamily.

It is found in the nucleus. Functionally, probably acts as a transcriptional activator. Binds to the GCC-box pathogenesis-related promoter element. May be involved in the regulation of gene expression by stress factors and by components of stress signal transduction pathways. The chain is Ethylene-responsive transcription factor ERF017 (ERF017) from Arabidopsis thaliana (Mouse-ear cress).